A 396-amino-acid polypeptide reads, in one-letter code: Putative ribosomal RNA large subunit methyltransferase YwbD (396 aa).

The PUA domain occupies 1 to 79 (MKLLTLKKAH…KHEQIDQAFF (79 aa)).

It belongs to the methyltransferase superfamily. RlmI family.

It localises to the cytoplasm. This chain is Putative ribosomal RNA large subunit methyltransferase YwbD (ywbD), found in Bacillus subtilis (strain 168).